A 465-amino-acid chain; its full sequence is Chromosomal replication initiator protein DnaA (465 aa).

The interval 1–84 (MSLSLWQQCL…RFEVGSKPLV (84 aa)) is domain I, interacts with DnaA modulators. The segment at 84–128 (VQTISQPAQSHHNPVSVARQQPVRMAPVRPSWDNSPVQAEHTYRS) is domain II. The interval 129–345 (NVNPKHTFDN…GALNRVIANA (217 aa)) is domain III, AAA+ region. The ATP site is built by glycine 173, glycine 175, lysine 176, and threonine 177. The segment at 346–465 (NFTGRSITID…FSNLIRTLSS (120 aa)) is domain IV, binds dsDNA.

The protein belongs to the DnaA family. As to quaternary structure, oligomerizes as a right-handed, spiral filament on DNA at oriC.

It is found in the cytoplasm. Its function is as follows. Plays an essential role in the initiation and regulation of chromosomal replication. ATP-DnaA binds to the origin of replication (oriC) to initiate formation of the DNA replication initiation complex once per cell cycle. Binds the DnaA box (a 9 base pair repeat at the origin) and separates the double-stranded (ds)DNA. Forms a right-handed helical filament on oriC DNA; dsDNA binds to the exterior of the filament while single-stranded (ss)DNA is stabiized in the filament's interior. The ATP-DnaA-oriC complex binds and stabilizes one strand of the AT-rich DNA unwinding element (DUE), permitting loading of DNA polymerase. After initiation quickly degrades to an ADP-DnaA complex that is not apt for DNA replication. Binds acidic phospholipids. In Pectobacterium atrosepticum (strain SCRI 1043 / ATCC BAA-672) (Erwinia carotovora subsp. atroseptica), this protein is Chromosomal replication initiator protein DnaA.